A 397-amino-acid chain; its full sequence is uncharacterized protein (397 aa).

A run of 4 helical transmembrane segments spans residues 255–275 (LLTY…ICYA), 284–304 (MITF…VLLA), 308–328 (LITA…PLPL), and 370–390 (VLLV…YCLG).

The protein resides in the cell membrane. This is an uncharacterized protein from Methanocaldococcus jannaschii (strain ATCC 43067 / DSM 2661 / JAL-1 / JCM 10045 / NBRC 100440) (Methanococcus jannaschii).